A 636-amino-acid polypeptide reads, in one-letter code: Polyadenylate-binding protein 1 (636 aa).

Met1 carries the post-translational modification N-acetylmethionine. RRM domains lie at 11-89 (ASLY…WSQR), 99-175 (GNIF…RFKS), 191-268 (TNVY…RAQK), and 294-370 (VNLY…LAQR). A UNR-binding region spans residues 166–289 (RKVFVGRFKS…FEQMKQDRIT (124 aa)). An N6-methyllysine modification is found at Lys299. Ser315 carries the phosphoserine modification. Residue Thr319 is modified to Phosphothreonine. Residues Arg385, Arg419, Arg432, and Arg436 each carry the omega-N-methylarginine modification. Omega-N-methylated arginine; by CARM1 is present on residues Arg455 and Arg460. Omega-N-methylarginine occurs at positions 475 and 481. Position 493 is an asymmetric dimethylarginine; alternate (Arg493). At Arg493 the chain carries Dimethylated arginine; alternate. Arg493 carries the post-translational modification Omega-N-methylarginine; alternate. Arg506 carries the post-translational modification Omega-N-methylarginine. Lys512 bears the N6-acetyllysine mark. Arg518 is subject to Omega-N-methylarginine. A PABC domain is found at 542–619 (QEPLTASMLA…AVAVLQAHQA (78 aa)).

The protein belongs to the polyadenylate-binding protein type-1 family. In terms of assembly, may form homodimers. Component of a multisubunit autoregulatory ribonucleoprotein complex (ARC), at least composed of IGF2BP1, PABPC1 and CSDE1. Directly interacts with IGF2BP1. Part of a complex associated with the FOS mCRD domain and consisting of HNRPD, SYNCRIP, PAIP1 and CSDE1/UNR. Interacts with PAIP1 and PAIP2 (via the PABPC1-interacting motifs PAM1 and PAM2). Interacts with PAIP1 with a 1:1 stoichiometry and with PAIP2 with a 1:2 stoichiometry. The interaction with CSDE1 is direct and RNA-independent. Found in a mRNP complex with YBX2. Interacts with TENT2/GLD2. Identified in the spliceosome C complex. Identified in a mRNP complex, at least composed of DHX9, DDX3X, ELAVL1, HNRNPU, IGF2BP1, ILF3, PABPC1, PCBP2, PTBP2, STAU1, STAU2, SYNCRIP and YBX1. The interaction with DDX3X is direct and RNA-independent. This interaction increases in stressed cells and decreases during cell recovery. Identified in a IGF2BP1-dependent mRNP granule complex containing untranslated mRNAs. Interacts with NXF1/TAP. Interacts with PIWIL1. Interacts with AGO1, AGO2, GSPT1 and GSPT2. Interacts with LARP4B. Interacts (via the second and third RRM domains and the C-terminus) with PAIP2B (via central acidic portion and C-terminus). Forms a complex with LARP1 and SHFL. Interacts with LARP4. Interacts with ZFC3H1 in a RNase-sensitive manner. Interacts with TRIM71 (via NHL repeats) in an RNA-dependent manner. Interacts with TENT5C; the interaction has no effect on TENT5C poly(A) polymerase function. Interacts with G3BP1 and G3BP2. Interacts with ENDOV; the interaction is RNA-dependent and stimulates ENDOV activity. Interacts with UPF1; the interaction is RNA-dependent. Interacts with IGF2BP2 and IGF2BP3. May interact with SETX. Interacts with RBM46. Interacts with PAN3 isoform 1/Pan3L and isoform 3/Pan3S (via N-terminus); interaction with isoform 1 is less efficient than with isoform 3. In terms of processing, phosphorylated by MAPKAPK2. Post-translationally, methylated by CARM1. Arg-493 is dimethylated, probably to asymmetric dimethylarginine.

The protein localises to the cytoplasm. It is found in the stress granule. It localises to the nucleus. Its subcellular location is the cell projection. The protein resides in the lamellipodium. In terms of biological role, binds the poly(A) tail of mRNA, including that of its own transcript, and regulates processes of mRNA metabolism such as pre-mRNA splicing and mRNA stability. Its function in translational initiation regulation can either be enhanced by PAIP1 or repressed by PAIP2. Can probably bind to cytoplasmic RNA sequences other than poly(A) in vivo. Binds to N6-methyladenosine (m6A)-containing mRNAs and contributes to MYC stability by binding to m6A-containing MYC mRNAs. Involved in translationally coupled mRNA turnover. Implicated with other RNA-binding proteins in the cytoplasmic deadenylation/translational and decay interplay of the FOS mRNA mediated by the major coding-region determinant of instability (mCRD) domain. Involved in regulation of nonsense-mediated decay (NMD) of mRNAs containing premature stop codons; for the recognition of premature termination codons (PTC) and initiation of NMD a competitive interaction between UPF1 and PABPC1 with the ribosome-bound release factors is proposed. By binding to long poly(A) tails, may protect them from uridylation by ZCCHC6/ZCCHC11 and hence contribute to mRNA stability. The protein is Polyadenylate-binding protein 1 (Pabpc1) of Rattus norvegicus (Rat).